Reading from the N-terminus, the 84-residue chain is uncharacterized protein (84 aa).

2 helical membrane passes run 7–27 (HVNFQIVVGIPLLIKAVILCI) and 52–72 (ITIIPHSVLYVSLSYYIINPC).

It localises to the membrane. This is an uncharacterized protein from Saccharomyces cerevisiae (strain ATCC 204508 / S288c) (Baker's yeast).